The chain runs to 111 residues: Cornifelin homolog A (111 aa).

It belongs to the cornifelin family.

The sequence is that of Cornifelin homolog A (cnfn-a) from Xenopus laevis (African clawed frog).